A 357-amino-acid chain; its full sequence is Alanine racemase (357 aa).

Lysine 35 (proton acceptor; specific for D-alanine) is an active-site residue. N6-(pyridoxal phosphate)lysine is present on lysine 35. Residue arginine 130 coordinates substrate. Catalysis depends on tyrosine 255, which acts as the Proton acceptor; specific for L-alanine. Residue methionine 303 coordinates substrate.

The protein belongs to the alanine racemase family. Pyridoxal 5'-phosphate is required as a cofactor.

The catalysed reaction is L-alanine = D-alanine. It participates in amino-acid biosynthesis; D-alanine biosynthesis; D-alanine from L-alanine: step 1/1. Functionally, catalyzes the interconversion of L-alanine and D-alanine. May also act on other amino acids. This is Alanine racemase (alr) from Nitrosospira multiformis (strain ATCC 25196 / NCIMB 11849 / C 71).